The sequence spans 510 residues: GMP synthase [glutamine-hydrolyzing] (510 aa).

Residues 3-194 form the Glutamine amidotransferase type-1 domain; the sequence is QILILDFGSQ…ARVICGYKEK (192 aa). Cys-80 serves as the catalytic Nucleophile. Residues His-168 and Glu-170 contribute to the active site. One can recognise a GMPS ATP-PPase domain in the interval 195-385; the sequence is WTPASIMTAS…LGLGSEIVDI (191 aa). Residue 222 to 228 coordinates ATP; the sequence is SGGVDSS.

Homodimer.

It catalyses the reaction XMP + L-glutamine + ATP + H2O = GMP + L-glutamate + AMP + diphosphate + 2 H(+). Its pathway is purine metabolism; GMP biosynthesis; GMP from XMP (L-Gln route): step 1/1. In terms of biological role, catalyzes the synthesis of GMP from XMP. The protein is GMP synthase [glutamine-hydrolyzing] of Elusimicrobium minutum (strain Pei191).